The following is an 88-amino-acid chain: Phosphocarrier protein HPr (88 aa).

The region spanning 1–88 (MEQASFVVID…EVLKKEGLAE (88 aa)) is the HPr domain. H15 (pros-phosphohistidine intermediate) is an active-site residue. S46 is subject to Phosphoserine; by HPrK/P.

It belongs to the HPr family.

It is found in the cytoplasm. With respect to regulation, phosphorylation on Ser-46 inhibits the phosphoryl transfer from enzyme I to HPr. Its function is as follows. General (non sugar-specific) component of the phosphoenolpyruvate-dependent sugar phosphotransferase system (sugar PTS). This major carbohydrate active-transport system catalyzes the phosphorylation of incoming sugar substrates concomitantly with their translocation across the cell membrane. The phosphoryl group from phosphoenolpyruvate (PEP) is transferred to the phosphoryl carrier protein HPr by enzyme I. Phospho-HPr then transfers it to the PTS EIIA domain. In terms of biological role, P-Ser-HPr interacts with the catabolite control protein A (CcpA), forming a complex that binds to DNA at the catabolite response elements cre, operator sites preceding a large number of catabolite-regulated genes. Thus, P-Ser-HPr is a corepressor in carbon catabolite repression (CCR), a mechanism that allows bacteria to coordinate and optimize the utilization of available carbon sources. P-Ser-HPr also plays a role in inducer exclusion, in which it probably interacts with several non-PTS permeases and inhibits their transport activity. The protein is Phosphocarrier protein HPr (ptsH) of Listeria monocytogenes serovar 1/2a (strain ATCC BAA-679 / EGD-e).